A 526-amino-acid polypeptide reads, in one-letter code: ATP synthase subunit alpha (526 aa).

178–185 (GDRQTGKT) lines the ATP pocket.

Belongs to the ATPase alpha/beta chains family. As to quaternary structure, F-type ATPases have 2 components, CF(1) - the catalytic core - and CF(0) - the membrane proton channel. CF(1) has five subunits: alpha(3), beta(3), gamma(1), delta(1), epsilon(1). CF(0) has four main subunits: a(1), b(1), b'(1) and c(9-12).

Its subcellular location is the cell membrane. It carries out the reaction ATP + H2O + 4 H(+)(in) = ADP + phosphate + 5 H(+)(out). Its function is as follows. Produces ATP from ADP in the presence of a proton gradient across the membrane. The alpha chain is a regulatory subunit. The chain is ATP synthase subunit alpha from Roseiflexus castenholzii (strain DSM 13941 / HLO8).